Consider the following 622-residue polypeptide: DNA mismatch repair protein MutL (622 aa).

This sequence belongs to the DNA mismatch repair MutL/HexB family.

Functionally, this protein is involved in the repair of mismatches in DNA. It is required for dam-dependent methyl-directed DNA mismatch repair. May act as a 'molecular matchmaker', a protein that promotes the formation of a stable complex between two or more DNA-binding proteins in an ATP-dependent manner without itself being part of a final effector complex. This Actinobacillus pleuropneumoniae serotype 3 (strain JL03) protein is DNA mismatch repair protein MutL.